Here is a 92-residue protein sequence, read N- to C-terminus: Phospholemman (92 aa).

The N-terminal stretch at 1 to 20 (MAYLHHTLLVCMGLLAMANA) is a signal peptide. Over 22 to 35 (APQEQDPFTYDYQS) the chain is Extracellular. The chain crosses the membrane as a helical span at residues 36–56 (LRIGGLIIAGILFILGILIIL). The Cytoplasmic portion of the chain corresponds to 57 to 92 (KRGAWERFDTARRTGEPDEEEGTFRSSIRRLSTRRR). Residues 67-92 (ARRTGEPDEEEGTFRSSIRRLSTRRR) form a disordered region. A Phosphothreonine modification is found at threonine 79. Serine 82 is subject to Phosphoserine. Serine 83 is modified (phosphoserine; by PKA and PKC). A compositionally biased stretch (basic residues) spans 83-92 (SIRRLSTRRR). At serine 88 the chain carries Phosphoserine; by PKA. The residue at position 89 (threonine 89) is a Phosphothreonine; by PKC.

The protein belongs to the FXYD family. Homotetramer. Monomer. Regulatory subunit of the sodium/potassium-transporting ATPase (NKA) which is composed of a catalytic alpha subunit, a non-catalytic beta subunit and an additional regulatory subunit. The monomeric form associates with NKA while the oligomeric form does not. Interacts with the catalytic alpha-1 subunit ATP1A1. Also interacts with the catalytic alpha-2 and alpha-3 subunits ATP1A2 and ATP1A3. Very little interaction with ATP1A1, ATP1A2 or ATP1A3 when phosphorylated at Ser-83. Interacts with the non-catalytic beta-1 subunit ATP1B1. Oxidative stress decreases interaction with ATP1A1 but increases interaction with ATP1B1. Major plasma membrane substrate for cAMP-dependent protein kinase (PKA) and protein kinase C (PKC) in several different tissues. Phosphorylated in response to insulin and adrenergic stimulation. Phosphorylation at Ser-88 stimulates sodium/potassium-transporting ATPase activity while the unphosphorylated form inhibits sodium/potassium-transporting ATPase activity. Phosphorylation increases tetramerization, decreases binding to ATP1A1 and reduces inhibition of ATP1A1 activity. Phosphorylation at Ser-83 leads to greatly reduced interaction with ATP1A1, ATP1A2 and ATP1A3. May be phosphorylated by DMPK. In terms of processing, palmitoylation increases half-life and stability and is enhanced upon phosphorylation at Ser-88 by PKA. Post-translationally, glutathionylated. Expressed in ventricular myocytes (at protein level).

Its subcellular location is the cell membrane. It is found in the sarcolemma. It localises to the apical cell membrane. The protein resides in the membrane. The protein localises to the caveola. Its subcellular location is the T-tubule. In terms of biological role, associates with and regulates the activity of the sodium/potassium-transporting ATPase (NKA) which transports Na(+) out of the cell and K(+) into the cell. Inhibits NKA activity in its unphosphorylated state and stimulates activity when phosphorylated. Reduces glutathionylation of the NKA beta-1 subunit ATP1B1, thus reversing glutathionylation-mediated inhibition of ATP1B1. Contributes to female sexual development by maintaining the excitability of neurons which secrete gonadotropin-releasing hormone. The protein is Phospholemman of Oryctolagus cuniculus (Rabbit).